A 420-amino-acid chain; its full sequence is Histidine--tRNA ligase (420 aa).

This sequence belongs to the class-II aminoacyl-tRNA synthetase family. As to quaternary structure, homodimer.

It localises to the cytoplasm. The enzyme catalyses tRNA(His) + L-histidine + ATP = L-histidyl-tRNA(His) + AMP + diphosphate + H(+). The sequence is that of Histidine--tRNA ligase from Staphylococcus saprophyticus subsp. saprophyticus (strain ATCC 15305 / DSM 20229 / NCIMB 8711 / NCTC 7292 / S-41).